A 1042-amino-acid polypeptide reads, in one-letter code: Probable serine/threonine protein kinase IRE4 (1042 aa).

3 stretches are compositionally biased toward basic and acidic residues: residues 1-10 (MAEENRKDRG), 102-115 (EEIKLRGKNSGKDE), and 314-327 (QRNEAGQKFKRRDK). 3 disordered regions span residues 1–75 (MAEE…GTKL), 90–115 (PPKYACSSTTSSEEIKLRGKNSGKDE), and 297–327 (WGSTPRVDDSGSGYPEYQRNEAGQKFKRRDK). Residues 402-421 (CRICEEEVPLFHLEPHSYIC) form a C2H2-type; atypical zinc finger. One can recognise a Protein kinase domain in the interval 670-955 (FEIIKPISRG…AAEVKSHPFF (286 aa)). Residues 676-684 (ISRGAFGKV) and Lys-699 contribute to the ATP site. Asp-793 serves as the catalytic Proton acceptor. The segment at 830–850 (ESDVSPRTNSHHFQKNQEEER) is disordered. Position 854 is a phosphoserine (Ser-854). The AGC-kinase C-terminal domain maps to 956-1042 (QGVDWENLAL…KLFFLLLCVF (87 aa)).

It belongs to the protein kinase superfamily. AGC Ser/Thr protein kinase family.

It catalyses the reaction L-seryl-[protein] + ATP = O-phospho-L-seryl-[protein] + ADP + H(+). The enzyme catalyses L-threonyl-[protein] + ATP = O-phospho-L-threonyl-[protein] + ADP + H(+). The chain is Probable serine/threonine protein kinase IRE4 from Arabidopsis thaliana (Mouse-ear cress).